A 1388-amino-acid chain; its full sequence is DNA-directed RNA polymerase subunit beta (1388 aa).

Belongs to the RNA polymerase beta chain family. In terms of assembly, the RNAP catalytic core consists of 2 alpha, 1 beta, 1 beta' and 1 omega subunit. When a sigma factor is associated with the core the holoenzyme is formed, which can initiate transcription.

The enzyme catalyses RNA(n) + a ribonucleoside 5'-triphosphate = RNA(n+1) + diphosphate. Functionally, DNA-dependent RNA polymerase catalyzes the transcription of DNA into RNA using the four ribonucleoside triphosphates as substrates. This is DNA-directed RNA polymerase subunit beta from Xylella fastidiosa (strain Temecula1 / ATCC 700964).